The following is an 800-amino-acid chain: DNA topoisomerase 4 subunit A (800 aa).

The Topo IIA-type catalytic domain maps to 31-495; sequence LPDVRDGLKP…EIEEIKIDKE (465 aa). Tyrosine 119 (O-(5'-phospho-DNA)-tyrosine intermediate) is an active-site residue.

Belongs to the type II topoisomerase GyrA/ParC subunit family. ParC type 2 subfamily. As to quaternary structure, heterotetramer composed of ParC and ParE.

It localises to the cell membrane. It carries out the reaction ATP-dependent breakage, passage and rejoining of double-stranded DNA.. Functionally, topoisomerase IV is essential for chromosome segregation. It relaxes supercoiled DNA. Performs the decatenation events required during the replication of a circular DNA molecule. The polypeptide is DNA topoisomerase 4 subunit A (Staphylococcus aureus (strain MSSA476)).